The chain runs to 123 residues: Ribonuclease P protein component (123 aa).

The protein belongs to the RnpA family. As to quaternary structure, consists of a catalytic RNA component (M1 or rnpB) and a protein subunit.

The enzyme catalyses Endonucleolytic cleavage of RNA, removing 5'-extranucleotides from tRNA precursor.. Functionally, RNaseP catalyzes the removal of the 5'-leader sequence from pre-tRNA to produce the mature 5'-terminus. It can also cleave other RNA substrates such as 4.5S RNA. The protein component plays an auxiliary but essential role in vivo by binding to the 5'-leader sequence and broadening the substrate specificity of the ribozyme. The protein is Ribonuclease P protein component of Streptomyces avermitilis (strain ATCC 31267 / DSM 46492 / JCM 5070 / NBRC 14893 / NCIMB 12804 / NRRL 8165 / MA-4680).